Consider the following 418-residue polypeptide: Gamma-glutamyl phosphate reductase (418 aa).

Belongs to the gamma-glutamyl phosphate reductase family.

It localises to the cytoplasm. The catalysed reaction is L-glutamate 5-semialdehyde + phosphate + NADP(+) = L-glutamyl 5-phosphate + NADPH + H(+). Its pathway is amino-acid biosynthesis; L-proline biosynthesis; L-glutamate 5-semialdehyde from L-glutamate: step 2/2. Catalyzes the NADPH-dependent reduction of L-glutamate 5-phosphate into L-glutamate 5-semialdehyde and phosphate. The product spontaneously undergoes cyclization to form 1-pyrroline-5-carboxylate. The protein is Gamma-glutamyl phosphate reductase of Histophilus somni (strain 129Pt) (Haemophilus somnus).